Reading from the N-terminus, the 204-residue chain is High frequency lysogenization protein HflD homolog (204 aa).

This sequence belongs to the HflD family.

It is found in the cytoplasm. The protein resides in the cell inner membrane. This chain is High frequency lysogenization protein HflD homolog, found in Xylella fastidiosa (strain M23).